The sequence spans 396 residues: MDISASPSIADGPVYTHQTVRLDSGLDLECGVHLAPLEVAYCTYGTLSPARDNAILVCHALTGDQYLAERNPLTGKPGWWSRMVGPGLPIDTDRYFVVCSNVLGGCMGTTGPRSICAETGKAWDSEFPPITMHDIVAAQAKLIDHLGIDRLFAVIGGSMGGMQALTWAADFPDRVFAAMPIATSPFHSAQNIAFNEVSRQAIFADPDWHDGHYRDFGAIPARGLGVARMMAHITYLSEEALSRKFGRRVRHDAATAVPASSSPSLFGEMFEVESYLRHQGSSFVRRFDANSYLTITRAMDYFDLAAEHDGDLANPFRKSQTRFCVVSFSSDWLFPTSQSRLLVRALNRAGANVSFVEIESDRGHDAFLLEEPDFDRTIRGFIAGAAEHAALKAGER.

The AB hydrolase-1 domain maps to 53–370; that stretch reads NAILVCHALT…DRGHDAFLLE (318 aa). Ser158 serves as the catalytic Nucleophile. Arg228 provides a ligand contact to substrate. Catalysis depends on residues Asp331 and His364. Asp365 is a substrate binding site.

It belongs to the AB hydrolase superfamily. MetX family. Homodimer.

Its subcellular location is the cytoplasm. It carries out the reaction L-homoserine + acetyl-CoA = O-acetyl-L-homoserine + CoA. It functions in the pathway amino-acid biosynthesis; L-methionine biosynthesis via de novo pathway; O-acetyl-L-homoserine from L-homoserine: step 1/1. Its function is as follows. Transfers an acetyl group from acetyl-CoA to L-homoserine, forming acetyl-L-homoserine. This Gluconobacter oxydans (strain 621H) (Gluconobacter suboxydans) protein is Homoserine O-acetyltransferase.